Reading from the N-terminus, the 696-residue chain is SLIT and NTRK-like protein 1 (696 aa).

The signal sequence occupies residues Met-1–Gly-17. Residues Asn-18–Thr-57 form the LRRNT 1 domain. The Extracellular segment spans residues Asn-18–Pro-622. LRR repeat units lie at residues Gln-59 to Asn-80, Asn-83 to Gly-104, Gln-106 to Gly-128, Asp-131 to Asp-152, Lys-155 to Tyr-176, and Pro-178 to Glu-199. The LRRCT 1 domain maps to Asn-212 to Leu-263. Residues Asn-265 to Asn-314 are disordered. In terms of domain architecture, LRRNT 2 spans Asn-332–Lys-373. LRR repeat units follow at residues Asn-376–Asp-397, Asn-400–Asn-421, Asp-424–Gly-445, Asn-448–Ala-469, Lys-472–Gly-493, and Ser-495–Asp-516. The LRRCT 2 domain maps to Asn-529–Gln-580. A helical membrane pass occupies residues Gly-623–Leu-643. At Arg-644–Asp-696 the chain is on the cytoplasmic side. Ser-695 carries the post-translational modification Phosphoserine; by CK2.

The protein belongs to the SLITRK family. Can form homodimers; homodimerization requires repeat LRR 2. Interacts with YWHAB, YWHAE, YWHAG, YWHAH, SFN, YWHAQ and YWHAZ. In terms of processing, undergoes proteolytic cleavage that results in shedding of the ectodomain and cleavage of the C-terminal cytoplasmic tail. Glycosylated. Phosphorylation at Ser-695 is necessary for proper function in promoting neurite outgrowth. Expressed predominantly in the frontal lobe of the cerebral cortex of the brain. Also expressed in some astrocytic brain tumors such as astrocytomas, oligodendrogliomas, glioblastomas, gangliogliomas and primitive neuroectodermal tumors.

It is found in the membrane. Its subcellular location is the secreted. It localises to the synapse. Its function is as follows. It is involved in synaptogenesis and promotes excitatory synapse differentiation. Enhances neuronal dendrite outgrowth. The sequence is that of SLIT and NTRK-like protein 1 (SLITRK1) from Homo sapiens (Human).